The chain runs to 319 residues: Epoxyqueuosine reductase (319 aa).

The active-site Proton donor is the D146. The 4Fe-4S ferredoxin-type domain occupies 188–220 (ASLPADQPARSLCGHCQRCLPACPTAAITEPFV). [4Fe-4S] cluster-binding residues include C200, C203, C206, C210, C226, C250, C253, and C257.

It belongs to the QueG family. As to quaternary structure, monomer. Cob(II)alamin serves as cofactor. [4Fe-4S] cluster is required as a cofactor.

It is found in the cytoplasm. The catalysed reaction is epoxyqueuosine(34) in tRNA + AH2 = queuosine(34) in tRNA + A + H2O. It functions in the pathway tRNA modification; tRNA-queuosine biosynthesis. In terms of biological role, catalyzes the conversion of epoxyqueuosine (oQ) to queuosine (Q), which is a hypermodified base found in the wobble positions of tRNA(Asp), tRNA(Asn), tRNA(His) and tRNA(Tyr). This Synechococcus sp. (strain RCC307) protein is Epoxyqueuosine reductase.